The following is a 338-amino-acid chain: Anthranilate phosphoribosyltransferase (338 aa).

5-phospho-alpha-D-ribose 1-diphosphate contacts are provided by residues G81, G84–D85, T89, N91–T94, K109–S117, and S121. G81 contributes to the anthranilate binding site. S93 contacts Mg(2+). N112 provides a ligand contact to anthranilate. R167 is an anthranilate binding site. Residues D226 and E227 each contribute to the Mg(2+) site.

Belongs to the anthranilate phosphoribosyltransferase family. As to quaternary structure, homodimer. Mg(2+) serves as cofactor.

The catalysed reaction is N-(5-phospho-beta-D-ribosyl)anthranilate + diphosphate = 5-phospho-alpha-D-ribose 1-diphosphate + anthranilate. The protein operates within amino-acid biosynthesis; L-tryptophan biosynthesis; L-tryptophan from chorismate: step 2/5. Functionally, catalyzes the transfer of the phosphoribosyl group of 5-phosphorylribose-1-pyrophosphate (PRPP) to anthranilate to yield N-(5'-phosphoribosyl)-anthranilate (PRA). In Acidithiobacillus ferrooxidans (strain ATCC 23270 / DSM 14882 / CIP 104768 / NCIMB 8455) (Ferrobacillus ferrooxidans (strain ATCC 23270)), this protein is Anthranilate phosphoribosyltransferase.